A 135-amino-acid chain; its full sequence is Small ribosomal subunit protein uS11 (135 aa).

A compositionally biased stretch (polar residues) spans 1-10 (MPPKSRTATA). Disordered stretches follow at residues 1-27 (MPPKSRTATASRKPRRKEKKNVAHGHA) and 114-135 (GAIQDVTPSPHNGCRPPKRRRV). Basic residues predominate over residues 12–27 (RKPRRKEKKNVAHGHA).

It belongs to the universal ribosomal protein uS11 family. As to quaternary structure, part of the 30S ribosomal subunit. Interacts with proteins S7 and S18. Binds to IF-3.

Its function is as follows. Located on the platform of the 30S subunit, it bridges several disparate RNA helices of the 16S rRNA. Forms part of the Shine-Dalgarno cleft in the 70S ribosome. The polypeptide is Small ribosomal subunit protein uS11 (Kineococcus radiotolerans (strain ATCC BAA-149 / DSM 14245 / SRS30216)).